Here is a 432-residue protein sequence, read N- to C-terminus: 3-chlorobenzoate-3,4-dioxygenase oxygenase subunit (432 aa).

The region spanning 27–133 is the Rieske domain; that stretch reads WIPALKSTEL…VKEMAGVVWV (107 aa). Residues C69, H71, C88, and H91 each contribute to the [2Fe-2S] cluster site. Fe cation-binding residues include H180 and H185.

Belongs to the bacterial ring-hydroxylating dioxygenase alpha subunit family. In terms of assembly, this dioxygenase system consists of two proteins: an oxygenase and an oxygenase reductase. Requires [2Fe-2S] cluster as cofactor. Fe cation serves as cofactor.

The protein is 3-chlorobenzoate-3,4-dioxygenase oxygenase subunit (cbaA) of Comamonas testosteroni (Pseudomonas testosteroni).